Reading from the N-terminus, the 240-residue chain is Uridylate kinase (240 aa).

An ATP-binding site is contributed by 13–16 (KLSG). An involved in allosteric activation by GTP region spans residues 21-26 (GEKGFG). Gly-55 contributes to the UMP binding site. Positions 56 and 60 each coordinate ATP. Residues Asp-75 and 136-143 (IGNPYFST) contribute to the UMP site. Residues Asn-164, Tyr-170, and Asp-173 each coordinate ATP.

It belongs to the UMP kinase family. In terms of assembly, homohexamer.

Its subcellular location is the cytoplasm. It catalyses the reaction UMP + ATP = UDP + ADP. The protein operates within pyrimidine metabolism; CTP biosynthesis via de novo pathway; UDP from UMP (UMPK route): step 1/1. Allosterically activated by GTP. Inhibited by UTP. In terms of biological role, catalyzes the reversible phosphorylation of UMP to UDP. The sequence is that of Uridylate kinase from Staphylococcus aureus (strain Newman).